A 384-amino-acid chain; its full sequence is Dual-specificity RNA methyltransferase RlmN (384 aa).

Glu-93 (proton acceptor) is an active-site residue. The region spanning 99–339 is the Radical SAM core domain; sequence EETRGTLCVS…TTIRKTRGDD (241 aa). Residues Cys-106 and Cys-344 are joined by a disulfide bond. [4Fe-4S] cluster-binding residues include Cys-113, Cys-117, and Cys-120. Residues 170-171, Ser-202, 224-226, and Asn-301 contribute to the S-adenosyl-L-methionine site; these read GE and SLH. The S-methylcysteine intermediate role is filled by Cys-344.

Belongs to the radical SAM superfamily. RlmN family. [4Fe-4S] cluster serves as cofactor.

Its subcellular location is the cytoplasm. The enzyme catalyses adenosine(2503) in 23S rRNA + 2 reduced [2Fe-2S]-[ferredoxin] + 2 S-adenosyl-L-methionine = 2-methyladenosine(2503) in 23S rRNA + 5'-deoxyadenosine + L-methionine + 2 oxidized [2Fe-2S]-[ferredoxin] + S-adenosyl-L-homocysteine. It catalyses the reaction adenosine(37) in tRNA + 2 reduced [2Fe-2S]-[ferredoxin] + 2 S-adenosyl-L-methionine = 2-methyladenosine(37) in tRNA + 5'-deoxyadenosine + L-methionine + 2 oxidized [2Fe-2S]-[ferredoxin] + S-adenosyl-L-homocysteine. Functionally, specifically methylates position 2 of adenine 2503 in 23S rRNA and position 2 of adenine 37 in tRNAs. m2A2503 modification seems to play a crucial role in the proofreading step occurring at the peptidyl transferase center and thus would serve to optimize ribosomal fidelity. This chain is Dual-specificity RNA methyltransferase RlmN, found in Cupriavidus necator (strain ATCC 17699 / DSM 428 / KCTC 22496 / NCIMB 10442 / H16 / Stanier 337) (Ralstonia eutropha).